The following is a 406-amino-acid chain: 2,3-bisphosphoglycerate-independent phosphoglycerate mutase (406 aa).

The tract at residues 156–183 (NLSDKISDSDPHSEGKPPEPIRPLDPSA) is disordered. Residues 160–174 (KISDSDPHSEGKPPE) show a composition bias toward basic and acidic residues.

Belongs to the BPG-independent phosphoglycerate mutase family. A-PGAM subfamily.

The enzyme catalyses (2R)-2-phosphoglycerate = (2R)-3-phosphoglycerate. Its pathway is carbohydrate degradation; glycolysis; pyruvate from D-glyceraldehyde 3-phosphate: step 3/5. Its function is as follows. Catalyzes the interconversion of 2-phosphoglycerate and 3-phosphoglycerate. The sequence is that of 2,3-bisphosphoglycerate-independent phosphoglycerate mutase from Thermoplasma volcanium (strain ATCC 51530 / DSM 4299 / JCM 9571 / NBRC 15438 / GSS1).